The sequence spans 310 residues: Olfactory receptor 5P56 (310 aa).

Residues 1-25 are Extracellular-facing; the sequence is MEAQNHTTVKEFILLGLTENSTLRV. Residues asparagine 5 and asparagine 20 are each glycosylated (N-linked (GlcNAc...) asparagine). Residues 26–46 form a helical membrane-spanning segment; that stretch reads ILFMIFLGIYTVTLVGNFSII. The Cytoplasmic portion of the chain corresponds to 47 to 54; it reads SLIRSCPQ. Residues 55–75 traverse the membrane as a helical segment; that stretch reads LHTPMYLFLSHLALVDIGFST. Residues 76-99 are Extracellular-facing; that stretch reads SITPIMLTGFLGHTVTLSVAACVA. Cysteine 97 and cysteine 189 form a disulfide bridge. A helical transmembrane segment spans residues 100–120; the sequence is QFCIAVTFGTVECFLLAVMAY. Over 121 to 133 the chain is Cytoplasmic; the sequence is DRYVAICSPLLYS. The chain crosses the membrane as a helical span at residues 134-154; it reads THMSPRICFLLVGASYVGGCV. Over 155–196 the chain is Extracellular; sequence NSGTFTSCLLILSFCGPNQIDHFFCDFPAVLKLSCSDVSIIG. Residues 197-217 form a helical membrane-spanning segment; the sequence is IIPSISAGSIIVITVFVIAVS. Over 218 to 237 the chain is Cytoplasmic; sequence YTYILITILNMRSTEGRHKA. A helical transmembrane segment spans residues 238–258; it reads FSTCTSHLTAVTLYYGTITFI. Residues 259-271 are Extracellular-facing; that stretch reads YVMPKSNYSTAQN. An N-linked (GlcNAc...) asparagine glycan is attached at asparagine 265. Residues 272–292 traverse the membrane as a helical segment; sequence KILSVFYTVVIPMLNPLIYSL. Residues 293-310 are Cytoplasmic-facing; sequence RNRDVKEALRKAIIRIFP.

This sequence belongs to the G-protein coupled receptor 1 family.

It localises to the cell membrane. Functionally, potential odorant receptor. This chain is Olfactory receptor 5P56, found in Mus musculus (Mouse).